Reading from the N-terminus, the 153-residue chain is Transcription antitermination protein NusB (153 aa).

The protein belongs to the NusB family.

Its function is as follows. Involved in transcription antitermination. Required for transcription of ribosomal RNA (rRNA) genes. Binds specifically to the boxA antiterminator sequence of the ribosomal RNA (rrn) operons. In Beutenbergia cavernae (strain ATCC BAA-8 / DSM 12333 / CCUG 43141 / JCM 11478 / NBRC 16432 / NCIMB 13614 / HKI 0122), this protein is Transcription antitermination protein NusB.